We begin with the raw amino-acid sequence, 322 residues long: Lymphokine-activated killer T-cell-originated protein kinase (322 aa).

At Met-1 the chain carries N-acetylmethionine. Phosphothreonine is present on residues Thr-9 and Thr-24. Ser-32 is subject to Phosphoserine. Residues 32 to 322 (SPFMQKLGFG…HIVEALETDV (291 aa)) form the Protein kinase domain. 38-46 (LGFGTGVNV) serves as a coordination point for ATP. Ser-59 is subject to Phosphoserine. Residue Lys-64 coordinates ATP. The active-site Proton acceptor is the Asp-167. A Glycyl lysine isopeptide (Lys-Gly) (interchain with G-Cter in SUMO2) cross-link involves residue Lys-169. Residues 320–322 (TDV) form a PDZ-interaction region.

The protein belongs to the protein kinase superfamily. STE Ser/Thr protein kinase family. MAP kinase kinase subfamily. As to quaternary structure, interacts with DLG1 and TP53. Phosphorylated; in a cell-cycle dependent manner at mitosis. As to expression, expressed in the testis and placenta. In the testis, restrictedly expressed in outer cell layer of seminiferous tubules.

The enzyme catalyses L-seryl-[protein] + ATP = O-phospho-L-seryl-[protein] + ADP + H(+). It catalyses the reaction L-threonyl-[protein] + ATP = O-phospho-L-threonyl-[protein] + ADP + H(+). It carries out the reaction L-tyrosyl-[protein] + ATP = O-phospho-L-tyrosyl-[protein] + ADP + H(+). Activated by phosphorylation. Its function is as follows. Phosphorylates MAP kinase p38. Seems to be active only in mitosis. May also play a role in the activation of lymphoid cells. When phosphorylated, forms a complex with TP53, leading to TP53 destabilization and attenuation of G2/M checkpoint during doxorubicin-induced DNA damage. This is Lymphokine-activated killer T-cell-originated protein kinase (PBK) from Homo sapiens (Human).